We begin with the raw amino-acid sequence, 217 residues long: Pyrophosphatase PpaX (217 aa).

The active-site Nucleophile is Asp-11.

It belongs to the HAD-like hydrolase superfamily. PpaX family. Mg(2+) is required as a cofactor.

The enzyme catalyses diphosphate + H2O = 2 phosphate + H(+). Functionally, hydrolyzes pyrophosphate formed during P-Ser-HPr dephosphorylation by HPrK/P. Might play a role in controlling the intracellular pyrophosphate pool. This chain is Pyrophosphatase PpaX, found in Listeria monocytogenes serotype 4a (strain HCC23).